The chain runs to 275 residues: WIMGHMVNPFEQVDEFLNLGANAIEFDIDFDENGIAKYTHHGIPCDCGRLCTKSAVFTEYLDYVRQVTSPGDPKFRKELVLLALDLKLQRISSEKAYAAGVDVATKLLDHYWKRGWNGGRAYILLNIPLVEDYEFIKGFKDTLRKEGHEQYNAKVGINFTGNEDLDEIRKVLEKLGEDEHIWQADGITSCFARGTDRLEKALEKRDTPGYKYISKVYAWTLVRSSIMRRSLRLGVDGVMSNNPDRVVKVLKEKEFANKFRLATYADNPWEKFTPI.

Residue His-5 is part of the active site. 2 residues coordinate Mg(2+): Glu-25 and Asp-27. Residue His-41 is the Nucleophile of the active site. 2 cysteine pairs are disulfide-bonded: Cys-45/Cys-51 and Cys-47/Cys-190. Asp-85 serves as a coordination point for Mg(2+).

It belongs to the arthropod phospholipase D family. Class II subfamily. Mg(2+) is required as a cofactor. As to expression, expressed by the venom gland.

The protein localises to the secreted. The enzyme catalyses an N-(acyl)-sphingosylphosphocholine = an N-(acyl)-sphingosyl-1,3-cyclic phosphate + choline. The catalysed reaction is an N-(acyl)-sphingosylphosphoethanolamine = an N-(acyl)-sphingosyl-1,3-cyclic phosphate + ethanolamine. It carries out the reaction a 1-acyl-sn-glycero-3-phosphocholine = a 1-acyl-sn-glycero-2,3-cyclic phosphate + choline. It catalyses the reaction a 1-acyl-sn-glycero-3-phosphoethanolamine = a 1-acyl-sn-glycero-2,3-cyclic phosphate + ethanolamine. Functionally, dermonecrotic toxins cleave the phosphodiester linkage between the phosphate and headgroup of certain phospholipids (sphingolipid and lysolipid substrates), forming an alcohol (often choline) and a cyclic phosphate. This toxin acts on sphingomyelin (SM). It may also act on ceramide phosphoethanolamine (CPE), lysophosphatidylcholine (LPC) and lysophosphatidylethanolamine (LPE), but not on lysophosphatidylserine (LPS), and lysophosphatidylglycerol (LPG). It acts by transphosphatidylation, releasing exclusively cyclic phosphate products as second products. Induces dermonecrosis, hemolysis, increased vascular permeability, edema, inflammatory response, and platelet aggregation. The polypeptide is Dermonecrotic toxin SpaSicTox-betaIIA1 (Sicarius patagonicus (Six-eyed sand spider)).